A 337-amino-acid chain; its full sequence is Ketol-acid reductoisomerase (NADP(+)) (337 aa).

One can recognise a KARI N-terminal Rossmann domain in the interval 1-181 (MKIYYEHDAD…GAARAGVIAT (181 aa)). NADP(+)-binding positions include 24–27 (FGSQ), arginine 47, serine 50, serine 52, and 82–85 (DEKQ). The active site involves histidine 107. An NADP(+)-binding site is contributed by glycine 133. The KARI C-terminal knotted domain occupies 182 to 328 (TFKDETETDL…SRLRAMMPFL (147 aa)). Residues aspartate 190, glutamate 194, glutamate 226, and glutamate 230 each coordinate Mg(2+). Serine 251 provides a ligand contact to substrate.

It belongs to the ketol-acid reductoisomerase family. Mg(2+) serves as cofactor.

It catalyses the reaction (2R)-2,3-dihydroxy-3-methylbutanoate + NADP(+) = (2S)-2-acetolactate + NADPH + H(+). The enzyme catalyses (2R,3R)-2,3-dihydroxy-3-methylpentanoate + NADP(+) = (S)-2-ethyl-2-hydroxy-3-oxobutanoate + NADPH + H(+). It participates in amino-acid biosynthesis; L-isoleucine biosynthesis; L-isoleucine from 2-oxobutanoate: step 2/4. Its pathway is amino-acid biosynthesis; L-valine biosynthesis; L-valine from pyruvate: step 2/4. Involved in the biosynthesis of branched-chain amino acids (BCAA). Catalyzes an alkyl-migration followed by a ketol-acid reduction of (S)-2-acetolactate (S2AL) to yield (R)-2,3-dihydroxy-isovalerate. In the isomerase reaction, S2AL is rearranged via a Mg-dependent methyl migration to produce 3-hydroxy-3-methyl-2-ketobutyrate (HMKB). In the reductase reaction, this 2-ketoacid undergoes a metal-dependent reduction by NADPH to yield (R)-2,3-dihydroxy-isovalerate. The polypeptide is Ketol-acid reductoisomerase (NADP(+)) (Thermus thermophilus (strain ATCC BAA-163 / DSM 7039 / HB27)).